The chain runs to 152 residues: Ribosomal RNA large subunit methyltransferase H (152 aa).

S-adenosyl-L-methionine contacts are provided by residues Leu-68, Gly-100, and 119–124 (FGRMTW).

It belongs to the RNA methyltransferase RlmH family. Homodimer.

The protein localises to the cytoplasm. The enzyme catalyses pseudouridine(1915) in 23S rRNA + S-adenosyl-L-methionine = N(3)-methylpseudouridine(1915) in 23S rRNA + S-adenosyl-L-homocysteine + H(+). Its function is as follows. Specifically methylates the pseudouridine at position 1915 (m3Psi1915) in 23S rRNA. The polypeptide is Ribosomal RNA large subunit methyltransferase H (Paramagnetospirillum magneticum (strain ATCC 700264 / AMB-1) (Magnetospirillum magneticum)).